The sequence spans 425 residues: Proteinase-activated receptor 1 (425 aa).

The N-terminal stretch at 1 to 21 is a signal peptide; sequence MGPRRLLLVAACFSLCGPLLS. Residues 22–41 constitute a propeptide that is removed on maturation; sequence ARTRARRPESKATNATLDPR. 3 N-linked (GlcNAc...) asparagine glycosylation sites follow: N35, N62, and N75. Over 42–102 the chain is Extracellular; sequence SFLLRNPNDK…SGYLTSSWLT (61 aa). The helical transmembrane segment at 103 to 128 threads the bilayer; it reads LFVPSVYTGVFVVSLPLNIMAIVVFI. The Cytoplasmic segment spans residues 129-137; it reads LKMKVKKPA. Residues 138–157 form a helical membrane-spanning segment; that stretch reads VVYMLHLATADVLFVSVLPF. The Extracellular segment spans residues 158-176; it reads KISYYFSGSDWQFGSELCR. The cysteines at positions 175 and 254 are disulfide-linked. A helical transmembrane segment spans residues 177 to 198; the sequence is FVTAAFYCNMYASILLMTVISI. Topologically, residues 199–218 are cytoplasmic; that stretch reads DRFLAVVYPMQSLSWRTLGR. A helical transmembrane segment spans residues 219 to 239; that stretch reads ASFTCLAIWALAIAGVVPLLL. The Extracellular portion of the chain corresponds to 240-268; sequence KEQTIQVPGLNITTCHDVLNETLLEGYYA. Residues N250 and N259 are each glycosylated (N-linked (GlcNAc...) asparagine). A helical membrane pass occupies residues 269 to 288; the sequence is YYFSAFSAVFFFVPLIISTV. At 289–311 the chain is on the cytoplasmic side; sequence CYVSIIRCLSSSAVANRSKKSRA. Residues 312-334 form a helical membrane-spanning segment; that stretch reads LFLSAAVFCIFIICFGPTNVLLI. The Extracellular portion of the chain corresponds to 335–350; sequence AHYSFLSHTSTTEAAY. The chain crosses the membrane as a helical span at residues 351–374; that stretch reads FAYLLCVCVSSISCCIDPLIYYYA. At 375–425 the chain is on the cytoplasmic side; that stretch reads SSECQRYVYSILCCKESSDPSSYNSSGQLMASKMDTCSSNLNNSIYKKLLT. Residue S418 is modified to Phosphoserine.

This sequence belongs to the G-protein coupled receptor 1 family. In terms of processing, proteolytic cleavage by thrombin generates a new N-terminus that functions as a tethered ligand. Also proteolytically cleaved by cathepsin CTSG. Cleavage at 41-Arg-|-Ser-42 by CTSG results in receptor activation while cleavage at 55-Phe-|-Trp-56 results in inhibition of receptor activation. Phosphorylated in the C-terminal tail; probably mediating desensitization prior to the uncoupling and internalization of the receptor. Platelets and vascular endothelial cells.

The protein resides in the cell membrane. Functionally, high affinity receptor that binds the activated thrombin, leading to calcium release from intracellular stores. The thrombin-activated receptor signaling pathway is mediated through PTX-insensitive G proteins, activation of phospholipase C resulting in the production of 1D-myo-inositol 1,4,5-trisphosphate (InsP3) which binds to InsP3 receptors causing calcium release from the stores. In astrocytes, the calcium released into the cytosol allows the Ca(2+)-dependent release of L-glutamate into the synaptic cleft through BEST1, that targets the neuronal postsynaptic GRIN2A/NMDAR receptor resulting in the synaptic plasticity regulation. May play a role in platelets activation and in vascular development. Mediates up-regulation of pro-inflammatory cytokines, such as MCP-1/CCL2 and IL6, triggered by coagulation factor Xa (F10) in cardiac fibroblasts and umbilical vein endothelial cells. The protein is Proteinase-activated receptor 1 of Homo sapiens (Human).